Here is a 169-residue protein sequence, read N- to C-terminus: Putative 3-methyladenine DNA glycosylase (169 aa).

The protein belongs to the DNA glycosylase MPG family.

The chain is Putative 3-methyladenine DNA glycosylase from Wolbachia sp. subsp. Brugia malayi (strain TRS).